The primary structure comprises 634 residues: Chaperone protein HtpG (634 aa).

The interval 1 to 342 is a; substrate-binding; the sequence is MSVETQKETL…SNDLSLNVSR (342 aa). The segment at 343 to 559 is b; the sequence is EILQKDPVID…EQDLGLQMRQ (217 aa). Residues 560–634 form a c region; it reads ILEASGQKVP…LNKLLVELSA (75 aa).

This sequence belongs to the heat shock protein 90 family. As to quaternary structure, homodimer.

The protein localises to the cytoplasm. Its function is as follows. Molecular chaperone. Has ATPase activity. In Pseudomonas aeruginosa (strain ATCC 15692 / DSM 22644 / CIP 104116 / JCM 14847 / LMG 12228 / 1C / PRS 101 / PAO1), this protein is Chaperone protein HtpG.